The chain runs to 219 residues: Probable GTP-binding protein EngB (219 aa).

The region spanning 40–212 is the EngB-type G domain; that stretch reads LLPEIAFIGK…KASLAKCIIK (173 aa). GTP is bound by residues 48 to 55, 75 to 79, 93 to 96, 160 to 163, and 191 to 193; these read GKSNVGKS, GRTGQ, DLPG, TKFD, and VSS. S55 and T77 together coordinate Mg(2+).

The protein belongs to the TRAFAC class TrmE-Era-EngA-EngB-Septin-like GTPase superfamily. EngB GTPase family. Requires Mg(2+) as cofactor.

Necessary for normal cell division and for the maintenance of normal septation. This chain is Probable GTP-binding protein EngB, found in Rickettsia canadensis (strain McKiel).